The following is a 59-amino-acid chain: UPF0291 protein CPR_1073 (59 aa).

Residues 1–30 (MNIDELTKRINELHKKHKEEGLSEDEHKER) form a disordered region.

This sequence belongs to the UPF0291 family.

It is found in the cytoplasm. The protein is UPF0291 protein CPR_1073 of Clostridium perfringens (strain SM101 / Type A).